Reading from the N-terminus, the 304-residue chain is Mitochondrial RNA-splicing protein MRS4 (304 aa).

Solcar repeat units lie at residues 21–108 (APLH…CKAR), 118–200 (HQPM…ASKF), and 207–300 (YNPL…AKHF). Transmembrane regions (helical) follow at residues 23 to 41 (LHSQLLAGAFAGIMEHSLM), 83 to 102 (GVQSVILGAGPAHAVYFGTY), 120 to 139 (PMKTALSGTIATIAADALMN), 175 to 194 (SYPTTLAMNIPFAAFNFMIY), 209 to 228 (PLIHCLCGGISGATCAALTT), and 275 to 288 (GLKPRIVANIPATA).

Belongs to the mitochondrial carrier (TC 2.A.29) family.

The protein localises to the mitochondrion inner membrane. Functionally, MRS4 suppresses a mitochondrial splice defect in the first intron of the COB gene. It may act as a carrier, exerting its suppressor activity via modulation of solute concentrations in the mitochondrion (possibly of cations). Not essential. The polypeptide is Mitochondrial RNA-splicing protein MRS4 (MRS4) (Saccharomyces cerevisiae (strain ATCC 204508 / S288c) (Baker's yeast)).